A 461-amino-acid chain; its full sequence is MNTSHKTLKTIAILGQPNVGKSSLFNRLARERIAITSDFAGTTRDINKRKIALNGYEVELLDTGGMAKDALLSKEIKALNLKAAQMSDLILYVVDGKSIPSDEDIKLFREVFKINPNCFLVINKIDNDKEKERAYAFSSFGMPKSFNISVSHNRGISALIDAVLSALNLNKIIEQDLDADILESLENNALEEETKEEEIIQVGIIGRVNVGKSSLLNALTKKERSLVSSVAGTTIDPIDETILIGDQKICFVDTAGIRHRSKILGIEKYALERTQKALEKSHIALLVLDVSAPFVELDEKISSLADKHSLGIILILNKWDIRYAPYEEIMETLKRKFRFLEYAPVITTSCLKARHIDEIKHKIIEVYECFSKRIPTSLLNSVISQATQKHPLPSDGGKLVKVYYATQFATKPPQISLIMNRPKALHFSYKRYLINTLRKEFNFLGTPLILNAKDKKSAQQN.

2 EngA-type G domains span residues 9-171 and 200-371; these read KTIA…NLNK and IQVG…ECFS. GTP contacts are provided by residues 15–22, 62–66, 123–126, 206–213, 253–257, and 317–320; these read GQPNVGKS, DTGGM, NKID, GRVNVGKS, DTAGI, and NKWD. The region spanning 372–456 is the KH-like domain; sequence KRIPTSLLNS…PLILNAKDKK (85 aa).

The protein belongs to the TRAFAC class TrmE-Era-EngA-EngB-Septin-like GTPase superfamily. EngA (Der) GTPase family. As to quaternary structure, associates with the 50S ribosomal subunit.

Functionally, GTPase that plays an essential role in the late steps of ribosome biogenesis. This is GTPase Der from Helicobacter pylori (strain HPAG1).